The chain runs to 210 residues: Adenylate kinase isoenzyme 1 (210 aa).

30-35 (GSGKGT) provides a ligand contact to ATP. The tract at residues 50–79 (SSGDLLRDEVKSGSPRGAQLTAIMESGALV) is NMP. AMP contacts are provided by residues S51, R56, 77–79 (ALV), 107–110 (GYPR), and Q114. The interval 144-154 (HRAQTSGRADD) is LID. R145 lines the ATP pocket. 2 residues coordinate AMP: R151 and R162. G190 is a binding site for ATP.

Belongs to the adenylate kinase family. AK1 subfamily. As to quaternary structure, monomer.

It is found in the cytoplasm. It carries out the reaction AMP + ATP = 2 ADP. Functionally, catalyzes the reversible transfer of the terminal phosphate group between ATP and AMP. Plays an important role in cellular energy homeostasis and in adenine nucleotide metabolism. The chain is Adenylate kinase isoenzyme 1 from Caenorhabditis elegans.